The following is a 399-amino-acid chain: Acetylornithine aminotransferase (399 aa).

Pyridoxal 5'-phosphate-binding positions include 97 to 98 (GA) and Phe-130. Position 133 (Arg-133) interacts with N(2)-acetyl-L-ornithine. Residue 215–218 (DEVQ) participates in pyridoxal 5'-phosphate binding. Lys-244 is subject to N6-(pyridoxal phosphate)lysine. A N(2)-acetyl-L-ornithine-binding site is contributed by Thr-272. Residue Thr-273 coordinates pyridoxal 5'-phosphate.

It belongs to the class-III pyridoxal-phosphate-dependent aminotransferase family. ArgD subfamily. Homodimer. It depends on pyridoxal 5'-phosphate as a cofactor.

The protein localises to the cytoplasm. It carries out the reaction N(2)-acetyl-L-ornithine + 2-oxoglutarate = N-acetyl-L-glutamate 5-semialdehyde + L-glutamate. The protein operates within amino-acid biosynthesis; L-arginine biosynthesis; N(2)-acetyl-L-ornithine from L-glutamate: step 4/4. The polypeptide is Acetylornithine aminotransferase (Mesorhizobium japonicum (strain LMG 29417 / CECT 9101 / MAFF 303099) (Mesorhizobium loti (strain MAFF 303099))).